Consider the following 411-residue polypeptide: LL-diaminopimelate aminotransferase (411 aa).

2 residues coordinate substrate: Tyr15 and Gly42. Pyridoxal 5'-phosphate contacts are provided by residues Tyr72, 108–109 (AK), Tyr132, Asn187, Tyr218, and 246–248 (SFS). The substrate site is built by Lys109, Tyr132, and Asn187. Lys249 bears the N6-(pyridoxal phosphate)lysine mark. The pyridoxal 5'-phosphate site is built by Arg257 and Asn292. Asn292 and Arg388 together coordinate substrate.

The protein belongs to the class-I pyridoxal-phosphate-dependent aminotransferase family. LL-diaminopimelate aminotransferase subfamily. As to quaternary structure, homodimer. The cofactor is pyridoxal 5'-phosphate.

It carries out the reaction (2S,6S)-2,6-diaminopimelate + 2-oxoglutarate = (S)-2,3,4,5-tetrahydrodipicolinate + L-glutamate + H2O + H(+). Its pathway is amino-acid biosynthesis; L-lysine biosynthesis via DAP pathway; LL-2,6-diaminopimelate from (S)-tetrahydrodipicolinate (aminotransferase route): step 1/1. Its function is as follows. Involved in the synthesis of meso-diaminopimelate (m-DAP or DL-DAP), required for both lysine and peptidoglycan biosynthesis. Catalyzes the direct conversion of tetrahydrodipicolinate to LL-diaminopimelate. The protein is LL-diaminopimelate aminotransferase of Rippkaea orientalis (strain PCC 8801 / RF-1) (Cyanothece sp. (strain PCC 8801)).